The primary structure comprises 795 residues: Delta-1-pyrroline-5-carboxylate synthase (795 aa).

The interval Met1–Pro361 is glutamate 5-kinase. Substrate is bound by residues Ser117, Asp223, and Asn246. Residues Ser266–Asp267 and Met305–Lys311 contribute to the ATP site. 3 positions are modified to N6-succinyllysine: Lys311, Lys347, and Lys550. Residues Thr362–Asn795 form a gamma-glutamyl phosphate reductase region.

It in the N-terminal section; belongs to the glutamate 5-kinase family. This sequence in the C-terminal section; belongs to the gamma-glutamyl phosphate reductase family. Can form homodimers/multimers.

The protein localises to the mitochondrion matrix. The catalysed reaction is L-glutamate + ATP = L-glutamyl 5-phosphate + ADP. It catalyses the reaction L-glutamate 5-semialdehyde + phosphate + NADP(+) = L-glutamyl 5-phosphate + NADPH + H(+). The protein operates within amino-acid biosynthesis; L-proline biosynthesis; L-glutamate 5-semialdehyde from L-glutamate: step 1/2. Its pathway is amino-acid biosynthesis; L-proline biosynthesis; L-glutamate 5-semialdehyde from L-glutamate: step 2/2. Bifunctional enzyme that converts glutamate to glutamate 5-semialdehyde, an intermediate in the biosynthesis of proline, ornithine and arginine. This is Delta-1-pyrroline-5-carboxylate synthase (ALDH18A1) from Pongo abelii (Sumatran orangutan).